The sequence spans 414 residues: DNA primase large subunit PriL (414 aa).

Residues cysteine 251, cysteine 352, cysteine 370, and cysteine 376 each contribute to the [4Fe-4S] cluster site.

It belongs to the eukaryotic-type primase large subunit family. Heterodimer of a small subunit (PriS) and a large subunit (PriL). [4Fe-4S] cluster serves as cofactor.

Regulatory subunit of DNA primase, an RNA polymerase that catalyzes the synthesis of short RNA molecules used as primers for DNA polymerase during DNA replication. Stabilizes and modulates the activity of the small subunit, increasing the rate of DNA synthesis, and conferring RNA synthesis capability. The DNA polymerase activity may enable DNA primase to also catalyze primer extension after primer synthesis. May also play a role in DNA repair. This Methanocaldococcus jannaschii (strain ATCC 43067 / DSM 2661 / JAL-1 / JCM 10045 / NBRC 100440) (Methanococcus jannaschii) protein is DNA primase large subunit PriL.